Here is a 236-residue protein sequence, read N- to C-terminus: 2-C-methyl-D-erythritol 4-phosphate cytidylyltransferase (236 aa).

Belongs to the IspD/TarI cytidylyltransferase family. IspD subfamily. Homodimer.

The enzyme catalyses 2-C-methyl-D-erythritol 4-phosphate + CTP + H(+) = 4-CDP-2-C-methyl-D-erythritol + diphosphate. The protein operates within isoprenoid biosynthesis; isopentenyl diphosphate biosynthesis via DXP pathway; isopentenyl diphosphate from 1-deoxy-D-xylulose 5-phosphate: step 2/6. Its function is as follows. Catalyzes the formation of 4-diphosphocytidyl-2-C-methyl-D-erythritol from CTP and 2-C-methyl-D-erythritol 4-phosphate (MEP). In Cronobacter sakazakii (strain ATCC BAA-894) (Enterobacter sakazakii), this protein is 2-C-methyl-D-erythritol 4-phosphate cytidylyltransferase.